Here is a 346-residue protein sequence, read N- to C-terminus: 3-isopropylmalate dehydrogenase (346 aa).

76–87 (GPQWTDPNNRPE) is an NAD(+) binding site. Arg-94, Arg-104, Arg-132, and Asp-217 together coordinate substrate. Mg(2+)-binding residues include Asp-217, Asp-241, and Asp-245. An NAD(+)-binding site is contributed by 275 to 287 (GSAPDIANQNLAN).

The protein belongs to the isocitrate and isopropylmalate dehydrogenases family. LeuB type 1 subfamily. As to quaternary structure, homodimer. The cofactor is Mg(2+). Mn(2+) is required as a cofactor.

It localises to the cytoplasm. The enzyme catalyses (2R,3S)-3-isopropylmalate + NAD(+) = 4-methyl-2-oxopentanoate + CO2 + NADH. It functions in the pathway amino-acid biosynthesis; L-leucine biosynthesis; L-leucine from 3-methyl-2-oxobutanoate: step 3/4. In terms of biological role, catalyzes the oxidation of 3-carboxy-2-hydroxy-4-methylpentanoate (3-isopropylmalate) to 3-carboxy-4-methyl-2-oxopentanoate. The product decarboxylates to 4-methyl-2 oxopentanoate. This is 3-isopropylmalate dehydrogenase from Staphylococcus haemolyticus (strain JCSC1435).